The primary structure comprises 479 residues: Ammonium transporter Rh type C (479 aa).

The Cytoplasmic portion of the chain corresponds to 1–9 (MAWNTNLRW). A helical membrane pass occupies residues 10–30 (RLPLTCLLLQVAMVILFGVFV). At 31–60 (RYDFDADAHWWTERKHKNLSEVENEFYYRY) the chain is on the extracellular side. N-linked (GlcNAc...) asparagine glycosylation occurs at N48. The chain crosses the membrane as a helical span at residues 61-81 (PSFQDVHVMVFVGFGFLMTFL). Residues 82 to 85 (QRYG) are Cytoplasmic-facing. The chain crosses the membrane as a helical span at residues 86–106 (FSAVGFNFLLAAFGIQWALLM). The Extracellular segment spans residues 107–123 (QGWFHFLEGRYIVVGVE). The helical transmembrane segment at 124-144 (NLINADFCVASVCVAFGAVLG) threads the bilayer. Topologically, residues 145–148 (KVSP) are cytoplasmic. Residues 149–169 (IQLLIMTFFQVTLFAVNEFIL) form a helical membrane-spanning segment. Residues 170-177 (LNLLKVKD) are Extracellular-facing. A helical membrane pass occupies residues 178-200 (AGGSMTIHTFYAYFELTVTRILY). The Cytoplasmic segment spans residues 201-218 (RRNLEQSKERQSSAYQSD). Residues 219-239 (LFAMIGTLFLWMYWPSFNSAI) form a helical membrane-spanning segment. Residues 240–250 (SYHGDSQHRAA) lie on the Extracellular side of the membrane. The helical transmembrane segment at 251 to 271 (INTYCSLAACVLTSVAVSSAL) threads the bilayer. At 272–281 (HKKGKLDMVH) the chain is on the cytoplasmic side. Residues 282 to 302 (IQNATLAGGVAVGTTAEMMLM) traverse the membrane as a helical segment. P303 is a topological domain (extracellular). Residues 304 to 324 (YGALIIGFICGIISTLGFVYL) form a helical membrane-spanning segment. Residues 325–345 (TPFLESRLHIQDTCGINNLHG) are Cytoplasmic-facing. The helical transmembrane segment at 346 to 366 (IPGIIGGIVGAVTAASASLEV) threads the bilayer. Residues 367-394 (YGKEGLVHSFDFQDFKRDWTARTQGKFQ) are Extracellular-facing. Residues 395-415 (IYGLLVTLAMALMGGIIVGLI) traverse the membrane as a helical segment. Over 416 to 479 (LRLPFWGQPS…PMASSVPLVP (64 aa)) the chain is Cytoplasmic.

Belongs to the ammonium transporter (TC 2.A.49) family. Rh subfamily. As to quaternary structure, homotrimer. In terms of processing, N-glycosylated.

It localises to the apical cell membrane. The catalysed reaction is NH4(+)(in) = NH4(+)(out). It catalyses the reaction methylamine(out) = methylamine(in). It carries out the reaction CO2(out) = CO2(in). Ammonium transporter involved in the maintenance of acid-base homeostasis. Transports ammonium and its related derivative methylammonium across the plasma membrane of epithelial cells likely contributing to renal transepithelial ammonia transport and ammonia metabolism. Postulated to primarily mediate an electroneutral bidirectional transport of NH3 ammonia species according to a mechanism that implies interaction of an NH4(+) ion with acidic residues of the pore entry followed by dissociation of NH4(+) into NH3 and H(+). As a result NH3 transits through the central pore and is protonated on the extracellular side reforming NH4(+). May act as a CO2 channel providing for renal acid secretion. The chain is Ammonium transporter Rh type C (RHCG) from Macaca mulatta (Rhesus macaque).